Consider the following 458-residue polypeptide: Phosphoglucosamine mutase (458 aa).

Ser-106 serves as the catalytic Phosphoserine intermediate. Mg(2+)-binding residues include Ser-106, Asp-247, Asp-249, and Asp-251. Ser-106 is modified (phosphoserine).

This sequence belongs to the phosphohexose mutase family. It depends on Mg(2+) as a cofactor. Post-translationally, activated by phosphorylation.

It catalyses the reaction alpha-D-glucosamine 1-phosphate = D-glucosamine 6-phosphate. Functionally, catalyzes the conversion of glucosamine-6-phosphate to glucosamine-1-phosphate. The sequence is that of Phosphoglucosamine mutase from Chlamydia abortus (strain DSM 27085 / S26/3) (Chlamydophila abortus).